The primary structure comprises 194 residues: 5'-deoxynucleotidase VV1113 (194 aa).

Residues 18 to 19 (RW) and His33 each bind substrate. In terms of domain architecture, HD spans 30–142 (VSEHSLQVAF…VKQADSICAY (113 aa)). A divalent metal cation is bound by residues His33, His68, and Asp69. Substrate contacts are provided by residues Asp69, 77-80 (DLPT), and Asp137. Position 137 (Asp137) interacts with a divalent metal cation.

The protein belongs to the 5DNU family. Homodimer. A divalent metal cation is required as a cofactor.

The protein resides in the cytoplasm. The catalysed reaction is a 2'-deoxyribonucleoside 5'-phosphate + H2O = a 2'-deoxyribonucleoside + phosphate. Its function is as follows. Catalyzes the strictly specific dephosphorylation of 2'-deoxyribonucleoside 5'-monophosphates. The polypeptide is 5'-deoxynucleotidase VV1113 (Vibrio vulnificus (strain YJ016)).